Consider the following 394-residue polypeptide: Protein LAX PANICLE 2 (394 aa).

The tract at residues 1–193 is disordered; it reads MVPARSLAHP…PTPRHHHHDV (193 aa). A compositionally biased stretch (basic residues) spans 8–20; the sequence is AHPHPHLVRRRRD. A compositionally biased stretch (basic and acidic residues) spans 60 to 84; sequence QHDPPKQPPPREADDDHHRIQEREP. Low complexity-rich tracts occupy residues 90-101, 119-131, and 146-155; these read TTTRNQRLQLQL, GTSG…SSSN, and GPASPGASAG. Residues 170–185 show a composition bias toward pro residues; that stretch reads APQPPTPTPTPTPTPT.

In terms of assembly, interacts with LAX1.

Its subcellular location is the nucleus. Functionally, involved in the regulation of shoot branching by controlling axillary meristem (AM) formation. Functions in association with LAX1 to regulate the process of AM formation. Possesses transactivation activity in yeast. The chain is Protein LAX PANICLE 2 from Oryza sativa subsp. japonica (Rice).